A 188-amino-acid polypeptide reads, in one-letter code: HTH-type transcriptional regulator QacR (188 aa).

The region spanning 1 to 61 (MNLKDKILGV…EILNIEESKW (61 aa)) is the HTH tetR-type domain. The segment at residues 24–43 (TTGEIVKLSESSKGNLYYHF) is a DNA-binding region (H-T-H motif).

In terms of assembly, homodimer. Binds cooperatively to DNA as a pair of dimers.

Its function is as follows. Transcriptional repressor of qacA. Binds to IR1, an unusually long 28 bp operator, which is located downstream from the qacA promoter and overlaps its transcription start site. QacR is induced from its IR1 site by binding to one of many structurally dissimilar cationic lipophilic compounds, which are also substrates of QacA. The polypeptide is HTH-type transcriptional regulator QacR (qacR) (Staphylococcus aureus (strain Mu50 / ATCC 700699)).